We begin with the raw amino-acid sequence, 108 residues long: Somatoliberin (108 aa).

The signal sequence occupies residues 1 to 20 (MPLWVFFFVILTLSNSSHCS). Residues 21-31 (PPPPLTLRMRR) constitute a propeptide that is removed on maturation. Leu75 is modified (leucine amide). The propeptide occupies 78–108 (QVDSMWAEQKQMELESILVALLQKHSRNSQG).

Belongs to the glucagon family.

Its subcellular location is the secreted. GRF is released by the hypothalamus and acts on the adenohypophyse to stimulate the secretion of growth hormone. The sequence is that of Somatoliberin (GHRH) from Homo sapiens (Human).